An 854-amino-acid chain; its full sequence is Glucans biosynthesis glucosyltransferase H (854 aa).

Helical transmembrane passes span I155–L175, I209–M229, V528–L548, I583–L603, F619–F639, F671–L691, and F695–Y715.

The protein belongs to the glycosyltransferase 2 family. OpgH subfamily.

Its subcellular location is the cell inner membrane. The protein operates within glycan metabolism; osmoregulated periplasmic glucan (OPG) biosynthesis. Involved in the biosynthesis of osmoregulated periplasmic glucans (OPGs). The chain is Glucans biosynthesis glucosyltransferase H from Pectobacterium atrosepticum (strain SCRI 1043 / ATCC BAA-672) (Erwinia carotovora subsp. atroseptica).